The primary structure comprises 109 residues: Latartoxin-2a (109 aa).

Positions 1-19 (MKVLVIIALCLVAFQSALS) are cleaved as a signal peptide. Positions 20 to 37 (KKIENFESYIEDLKSEAR) are cleaved as a propeptide — removed in mature form. The Processing quadruplet motif signature appears at 34 to 37 (SEAR). Disulfide bonds link C39–C56, C46–C67, C55–C81, C69–C79, and C72–C93. A Valine amide modification is found at V108.

This sequence belongs to the neurotoxin 19 (CSTX) family. 11 (latartoxin) subfamily. Post-translationally, contains 5 disulfide bonds. Cleavage of the propeptide depends on the processing quadruplet motif (XXXR, with at least one of X being E). Expressed by the venom gland.

It is found in the secreted. In terms of biological role, insect toxin. Causes paralysis in larvae of C.vicina by depolarizing membranes at the neuromuscular junction. This is Latartoxin-2a from Lachesana tarabaevi (Spider).